The sequence spans 351 residues: Histidinol-phosphate aminotransferase (351 aa).

Lys-221 is subject to N6-(pyridoxal phosphate)lysine.

The protein belongs to the class-II pyridoxal-phosphate-dependent aminotransferase family. Histidinol-phosphate aminotransferase subfamily. In terms of assembly, homodimer. Pyridoxal 5'-phosphate is required as a cofactor.

It catalyses the reaction L-histidinol phosphate + 2-oxoglutarate = 3-(imidazol-4-yl)-2-oxopropyl phosphate + L-glutamate. Its pathway is amino-acid biosynthesis; L-histidine biosynthesis; L-histidine from 5-phospho-alpha-D-ribose 1-diphosphate: step 7/9. This chain is Histidinol-phosphate aminotransferase, found in Staphylococcus haemolyticus (strain JCSC1435).